We begin with the raw amino-acid sequence, 21 residues long: Formate ester dehydrogenase beta chain (21 aa).

As to quaternary structure, heterotrimer composed of an alpha, a beta and a gamma chain.

The protein is Formate ester dehydrogenase beta chain of Amycolatopsis methanolica.